A 211-amino-acid polypeptide reads, in one-letter code: ATP phosphoribosyltransferase (211 aa).

This sequence belongs to the ATP phosphoribosyltransferase family. Short subfamily. In terms of assembly, heteromultimer composed of HisG and HisZ subunits.

It localises to the cytoplasm. It carries out the reaction 1-(5-phospho-beta-D-ribosyl)-ATP + diphosphate = 5-phospho-alpha-D-ribose 1-diphosphate + ATP. The protein operates within amino-acid biosynthesis; L-histidine biosynthesis; L-histidine from 5-phospho-alpha-D-ribose 1-diphosphate: step 1/9. Its function is as follows. Catalyzes the condensation of ATP and 5-phosphoribose 1-diphosphate to form N'-(5'-phosphoribosyl)-ATP (PR-ATP). Has a crucial role in the pathway because the rate of histidine biosynthesis seems to be controlled primarily by regulation of HisG enzymatic activity. This chain is ATP phosphoribosyltransferase (hisG), found in Pseudomonas aeruginosa (strain ATCC 15692 / DSM 22644 / CIP 104116 / JCM 14847 / LMG 12228 / 1C / PRS 101 / PAO1).